We begin with the raw amino-acid sequence, 503 residues long: ATP synthase subunit alpha (503 aa).

170–177 (GDRATGKT) lines the ATP pocket.

The protein belongs to the ATPase alpha/beta chains family. F-type ATPases have 2 components, CF(1) - the catalytic core - and CF(0) - the membrane proton channel. CF(1) has five subunits: alpha(3), beta(3), gamma(1), delta(1), epsilon(1). CF(0) has three main subunits: a(1), b(2) and c(9-12). The alpha and beta chains form an alternating ring which encloses part of the gamma chain. CF(1) is attached to CF(0) by a central stalk formed by the gamma and epsilon chains, while a peripheral stalk is formed by the delta and b chains.

The protein resides in the cell inner membrane. It catalyses the reaction ATP + H2O + 4 H(+)(in) = ADP + phosphate + 5 H(+)(out). In terms of biological role, produces ATP from ADP in the presence of a proton gradient across the membrane. The alpha chain is a regulatory subunit. The protein is ATP synthase subunit alpha of Aquifex aeolicus (strain VF5).